The sequence spans 86 residues: Cell division topological specificity factor (86 aa).

This sequence belongs to the MinE family.

Its function is as follows. Prevents the cell division inhibition by proteins MinC and MinD at internal division sites while permitting inhibition at polar sites. This ensures cell division at the proper site by restricting the formation of a division septum at the midpoint of the long axis of the cell. The sequence is that of Cell division topological specificity factor from Polaromonas sp. (strain JS666 / ATCC BAA-500).